Here is a 128-residue protein sequence, read N- to C-terminus: Glycine cleavage system H protein (128 aa).

The Lipoyl-binding domain occupies 22–104 (AIVVGITDFA…YEEGWMITIE (83 aa)). Residue Lys-63 is modified to N6-lipoyllysine.

The protein belongs to the GcvH family. The glycine cleavage system is composed of four proteins: P, T, L and H. It depends on (R)-lipoate as a cofactor.

The glycine cleavage system catalyzes the degradation of glycine. The H protein shuttles the methylamine group of glycine from the P protein to the T protein. This is Glycine cleavage system H protein from Anaeromyxobacter dehalogenans (strain 2CP-1 / ATCC BAA-258).